The following is a 190-amino-acid chain: Holliday junction branch migration complex subunit RuvA (190 aa).

The tract at residues 1 to 65 is domain I; sequence MIGNLRGIVD…ENVTQLYGFI (65 aa). The tract at residues 66-143 is domain II; it reads SKEEQQCLRL…KLEINNNHFH (78 aa). A flexible linker region spans residues 144–147; sequence SISE. A domain III region spans residues 147–190; it reads EDALSALINLGYERTKAYDTIKKIEDESPNLDTKDIIRMALKTI.

It belongs to the RuvA family. As to quaternary structure, homotetramer. Forms an RuvA(8)-RuvB(12)-Holliday junction (HJ) complex. HJ DNA is sandwiched between 2 RuvA tetramers; dsDNA enters through RuvA and exits via RuvB. An RuvB hexamer assembles on each DNA strand where it exits the tetramer. Each RuvB hexamer is contacted by two RuvA subunits (via domain III) on 2 adjacent RuvB subunits; this complex drives branch migration. In the full resolvosome a probable DNA-RuvA(4)-RuvB(12)-RuvC(2) complex forms which resolves the HJ.

The protein resides in the cytoplasm. The RuvA-RuvB-RuvC complex processes Holliday junction (HJ) DNA during genetic recombination and DNA repair, while the RuvA-RuvB complex plays an important role in the rescue of blocked DNA replication forks via replication fork reversal (RFR). RuvA specifically binds to HJ cruciform DNA, conferring on it an open structure. The RuvB hexamer acts as an ATP-dependent pump, pulling dsDNA into and through the RuvAB complex. HJ branch migration allows RuvC to scan DNA until it finds its consensus sequence, where it cleaves and resolves the cruciform DNA. This chain is Holliday junction branch migration complex subunit RuvA, found in Wolbachia pipientis subsp. Culex pipiens (strain wPip).